The sequence spans 498 residues: Cytochrome P450 monooxygenase apdB (498 aa).

A helical membrane pass occupies residues 20-40 (ASPQVFKLFVLILFVLLVLKI). Cys457 lines the heme pocket.

It belongs to the cytochrome P450 family. Heme serves as cofactor.

Its subcellular location is the membrane. Its pathway is secondary metabolite biosynthesis. Cytochrome P450 monooxygenase; part of the gene cluster that mediates the biosynthesis of aspyridones. The polyketide-amino acid backbone preaspyridone A is first assembled by the PKS-NRPS hybrid apdA. The assembly of preaspyridone A is initiated by loading of malonyl-CoA onto apdA, followed by decarboxylation to yield the acetyl starter unit. The growing polyketide chain then elongates into a tetraketide. The adpA PKS module catalyzes three Claisen condensations, as well as beta-keto processing and methylation. Alpha-methylation step during polyketide synthesis is a prerequisite and a key checkpoint for chain transfer between PKS and NRPS modules. The downstream NRPS module contains the condensation (C), adenylation (A), and thiolation (T) domains and catalyzes the incorporation of tyrosine via the formation of the L-tyrosinyl-thioester and the amide linkage between L-tyrosinyl-thioester and the tetraketide. The bimodular assembly line is terminated with a reductase (R) domain that facilitates formation and release of the tetramic acid product. Because apdA lacks a designated enoylreductase (ER) domain, the required activity is provided the enoyl reductase apdC. ApdC appears to operate with different stereoselectivity in different PKS cycle. Combined with apdC, apdA is proposed to synthesize preaspyridone A via about 20 enzymatic steps. A number of oxidative steps performed successively by the cytochrome P450 monooxygenases apdE and apdB are required for the conversion of preaspyridone A to aspyridone A. The cytochrome P450 monooxygenase apdE is responsible for the oxidative dephenylation of preaspyridone A. Finally, the predicted FAD-dependent monooxygenase apdD and the acyl-CoA dehydrogenase apdG may be involved in the transformation of aspyridone A into aspyridone B. This Emericella nidulans (strain FGSC A4 / ATCC 38163 / CBS 112.46 / NRRL 194 / M139) (Aspergillus nidulans) protein is Cytochrome P450 monooxygenase apdB.